A 145-amino-acid polypeptide reads, in one-letter code: Large ribosomal subunit protein uL11 (145 aa).

This sequence belongs to the universal ribosomal protein uL11 family. As to quaternary structure, part of the ribosomal stalk of the 50S ribosomal subunit. Interacts with L10 and the large rRNA to form the base of the stalk. L10 forms an elongated spine to which L12 dimers bind in a sequential fashion forming a multimeric L10(L12)X complex. One or more lysine residues are methylated.

In terms of biological role, forms part of the ribosomal stalk which helps the ribosome interact with GTP-bound translation factors. The protein is Large ribosomal subunit protein uL11 of Porphyromonas gingivalis (strain ATCC 33277 / DSM 20709 / CIP 103683 / JCM 12257 / NCTC 11834 / 2561).